Consider the following 203-residue polypeptide: uncharacterized protein (203 aa).

Positions 117 to 138 (SSDPKLKQPSNCLNDQTNNDSA) are disordered. Positions 124 to 138 (QPSNCLNDQTNNDSA) are enriched in polar residues.

The protein localises to the cytoplasm. Its subcellular location is the nucleus. This is an uncharacterized protein from Schizosaccharomyces pombe (strain 972 / ATCC 24843) (Fission yeast).